Consider the following 392-residue polypeptide: S-adenosylmethionine synthase (392 aa).

His20 contributes to the ATP binding site. Residue Asp22 coordinates Mg(2+). Glu48 is a K(+) binding site. 2 residues coordinate L-methionine: Glu61 and Gln106. A flexible loop region spans residues 106–116 (QSRDIINAIEK). Residues 171-173 (DSK), Asp248, 254-255 (RK), Ala271, and Lys275 each bind ATP. Position 248 (Asp248) interacts with L-methionine. Lys279 provides a ligand contact to L-methionine.

Belongs to the AdoMet synthase family. As to quaternary structure, homotetramer; dimer of dimers. Requires Mg(2+) as cofactor. K(+) serves as cofactor.

It is found in the cytoplasm. It catalyses the reaction L-methionine + ATP + H2O = S-adenosyl-L-methionine + phosphate + diphosphate. Its pathway is amino-acid biosynthesis; S-adenosyl-L-methionine biosynthesis; S-adenosyl-L-methionine from L-methionine: step 1/1. In terms of biological role, catalyzes the formation of S-adenosylmethionine (AdoMet) from methionine and ATP. The overall synthetic reaction is composed of two sequential steps, AdoMet formation and the subsequent tripolyphosphate hydrolysis which occurs prior to release of AdoMet from the enzyme. This Borreliella burgdorferi (strain ATCC 35210 / DSM 4680 / CIP 102532 / B31) (Borrelia burgdorferi) protein is S-adenosylmethionine synthase.